Reading from the N-terminus, the 185-residue chain is Elongation factor P (185 aa).

This sequence belongs to the elongation factor P family.

It is found in the cytoplasm. Its pathway is protein biosynthesis; polypeptide chain elongation. Its function is as follows. Involved in peptide bond synthesis. Stimulates efficient translation and peptide-bond synthesis on native or reconstituted 70S ribosomes in vitro. Probably functions indirectly by altering the affinity of the ribosome for aminoacyl-tRNA, thus increasing their reactivity as acceptors for peptidyl transferase. The chain is Elongation factor P from Azoarcus sp. (strain BH72).